The primary structure comprises 130 residues: Small ribosomal subunit protein uS8 (130 aa).

It belongs to the universal ribosomal protein uS8 family. Part of the 30S ribosomal subunit. Contacts proteins S5 and S12.

In terms of biological role, one of the primary rRNA binding proteins, it binds directly to 16S rRNA central domain where it helps coordinate assembly of the platform of the 30S subunit. This is Small ribosomal subunit protein uS8 from Ruegeria sp. (strain TM1040) (Silicibacter sp.).